Consider the following 89-residue polypeptide: Cytochrome c oxidase subunit 7A, mitochondrial (89 aa).

The transit peptide at 1-31 directs the protein to the mitochondrion; that stretch reads MMNLSRAVVRSFATTAGRRSAAVPKDQIEKG. At 32–58 the chain is on the mitochondrial matrix side; sequence YFEIRKVQEHFQKKDGKPVFLKGSVVD. Residues 59–81 traverse the membrane as a helical segment; sequence NVLYRVTVALALVGIGGMGKLFY. Over 82 to 89 the chain is Mitochondrial intermembrane; that stretch reads ELSVPKKE.

The protein belongs to the cytochrome c oxidase VIIa family. In terms of assembly, component of the cytochrome c oxidase (complex IV, CIV), a multisubunit enzyme composed of a catalytic core of 3 subunits and several supernumerary subunits. The complex exists as a monomer or a dimer and forms supercomplexes (SCs) in the inner mitochondrial membrane with ubiquinol-cytochrome c oxidoreductase (cytochrome b-c1 complex, complex III, CIII).

The protein resides in the mitochondrion inner membrane. It participates in energy metabolism; oxidative phosphorylation. Functionally, component of the cytochrome c oxidase, the last enzyme in the mitochondrial electron transport chain which drives oxidative phosphorylation. The respiratory chain contains 3 multisubunit complexes succinate dehydrogenase (complex II, CII), ubiquinol-cytochrome c oxidoreductase (cytochrome b-c1 complex, complex III, CIII) and cytochrome c oxidase (complex IV, CIV), that cooperate to transfer electrons derived from NADH and succinate to molecular oxygen, creating an electrochemical gradient over the inner membrane that drives transmembrane transport and the ATP synthase. Cytochrome c oxidase is the component of the respiratory chain that catalyzes the reduction of oxygen to water. Electrons originating from reduced cytochrome c in the intermembrane space (IMS) are transferred via the dinuclear copper A center (CU(A)) of subunit 2 and heme A of subunit 1 to the active site in subunit 1, a binuclear center (BNC) formed by heme A3 and copper B (CU(B)). The BNC reduces molecular oxygen to 2 water molecules using 4 electrons from cytochrome c in the IMS and 4 protons from the mitochondrial matrix. In Drosophila melanogaster (Fruit fly), this protein is Cytochrome c oxidase subunit 7A, mitochondrial.